We begin with the raw amino-acid sequence, 273 residues long: NAD-dependent protein deacetylase 2 (273 aa).

The Deacetylase sirtuin-type domain occupies 1-273 (MSNAPLANQS…RCEAALAFLL (273 aa)). NAD(+) is bound by residues 26–46 (GAGC…GNWK) and 104–107 (QNVD). Residue H122 is the Proton acceptor of the active site. Zn(2+) contacts are provided by C130, C133, C181, and C184. Residues 221–223 (GSS), 247–249 (NLG), and C265 each bind NAD(+).

Belongs to the sirtuin family. Class II subfamily. It depends on Zn(2+) as a cofactor.

The protein resides in the cytoplasm. It catalyses the reaction N(6)-acetyl-L-lysyl-[protein] + NAD(+) + H2O = 2''-O-acetyl-ADP-D-ribose + nicotinamide + L-lysyl-[protein]. Functionally, NAD-dependent protein deacetylase which modulates the activities of several enzymes which are inactive in their acetylated form. In Bradyrhizobium diazoefficiens (strain JCM 10833 / BCRC 13528 / IAM 13628 / NBRC 14792 / USDA 110), this protein is NAD-dependent protein deacetylase 2.